Consider the following 309-residue polypeptide: MPIRVPDELPAVSFLRNENVFVMASSRAKTQEIRPLKVLILNLMPKKIETENQFLRLLSNSPLQIDIQLLRIDSRESKNTPAEHLNNFYCDFEDIQDENFDGLIVTGAPLGLVDFCDVAYWPQIERVIDWAKNHVTSTLFVCWAVQAALNILYGIPKMTREVKLSGVYQHQTLQQHALLTRGFDETFLAPHSRYADFPTEIIRQYTDLDILAESEQTGAYLFASKDKRLAFVTGHPEYDALTLAGEYCRDNDAGLNPVVPLNYFPDDNPELTPKASWRSHGHLLFANWLNYYVYQITPYDLRHMNPTLE.

C142 (acyl-thioester intermediate) is an active-site residue. The substrate site is built by K163 and S192. H235 acts as the Proton acceptor in catalysis. Residue E237 is part of the active site. Residue R249 coordinates substrate.

This sequence belongs to the MetA family.

It localises to the cytoplasm. The enzyme catalyses L-homoserine + succinyl-CoA = O-succinyl-L-homoserine + CoA. It functions in the pathway amino-acid biosynthesis; L-methionine biosynthesis via de novo pathway; O-succinyl-L-homoserine from L-homoserine: step 1/1. Its function is as follows. Transfers a succinyl group from succinyl-CoA to L-homoserine, forming succinyl-L-homoserine. The chain is Homoserine O-succinyltransferase from Serratia proteamaculans (strain 568).